We begin with the raw amino-acid sequence, 92 residues long: Parbolysin P7 (92 aa).

Cystine bridges form between cysteine 15–cysteine 36, cysteine 21–cysteine 32, and cysteine 46–cysteine 59.

Belongs to the worm cytolysin family. As to expression, localized within the skin and proboscis and are most readily isolated from body mucus secretions.

The protein localises to the secreted. In terms of biological role, cytolysin that shows hemolytic activity (on bovine erythrocytes, HC(50)=5.75 mg/ml). This hemolytic activity is completely inhibited by small unilamelar vesicles composed of PC/PG, PC/PI and PC/PS in 1:1 molar ratios (with at least 100 mg/ml concentration). This chain is Parbolysin P7, found in Parborlasia corrugatus (Antarctic nemertean worm).